Consider the following 330-residue polypeptide: Ribosomal RNA small subunit methyltransferase H (330 aa).

S-adenosyl-L-methionine contacts are provided by residues 48–50 (GGH), Asp67, Leu101, Asp115, and Gln122.

Belongs to the methyltransferase superfamily. RsmH family.

It is found in the cytoplasm. The enzyme catalyses cytidine(1402) in 16S rRNA + S-adenosyl-L-methionine = N(4)-methylcytidine(1402) in 16S rRNA + S-adenosyl-L-homocysteine + H(+). Specifically methylates the N4 position of cytidine in position 1402 (C1402) of 16S rRNA. This Pseudarthrobacter chlorophenolicus (strain ATCC 700700 / DSM 12829 / CIP 107037 / JCM 12360 / KCTC 9906 / NCIMB 13794 / A6) (Arthrobacter chlorophenolicus) protein is Ribosomal RNA small subunit methyltransferase H.